The following is a 1372-amino-acid chain: DNA-directed RNA polymerase subunit beta (1372 aa).

Belongs to the RNA polymerase beta chain family. The RNAP catalytic core consists of 2 alpha, 1 beta, 1 beta' and 1 omega subunit. When a sigma factor is associated with the core the holoenzyme is formed, which can initiate transcription.

The catalysed reaction is RNA(n) + a ribonucleoside 5'-triphosphate = RNA(n+1) + diphosphate. In terms of biological role, DNA-dependent RNA polymerase catalyzes the transcription of DNA into RNA using the four ribonucleoside triphosphates as substrates. The protein is DNA-directed RNA polymerase subunit beta of Bradyrhizobium sp. (strain ORS 278).